Reading from the N-terminus, the 390-residue chain is Copper-containing nitrite reductase (390 aa).

Residues 1-18 form the signal peptide; sequence MKRQALAAMIASLFALAA. Residue cysteine 19 is the site of N-palmitoyl cysteine attachment. The S-diacylglycerol cysteine moiety is linked to residue cysteine 19. The interval 30-51 is disordered; the sequence is ETPAAAAEAASSAAQTAAETPS. 2 Plastocyanin-like domains span residues 101 to 195 and 245 to 346; these read WTFD…ILVE and GHVG…LKVE. Cu cation contacts are provided by histidine 134, histidine 139, histidine 174, cysteine 175, histidine 183, and methionine 188. Residue histidine 139 coordinates substrate. Histidine 280 is a substrate binding site. Cu cation is bound at residue histidine 329. The segment at 367 to 390 is disordered; sequence GAAPAASAPAASAPAASASEKSVY. The segment covering 368–390 has biased composition (low complexity); sequence AAPAASAPAASAPAASASEKSVY. Repeat copies occupy residues 371–375, 376–380, and 381–385. Residues 371 to 385 are 3 X 5 AA tandem repeats of A-A-S-A-P; that stretch reads AASAPAASAPAASAS.

Belongs to the multicopper oxidase family. Homotrimer. The cofactor is Cu(+). Requires Cu(2+) as cofactor.

It is found in the cell outer membrane. It carries out the reaction nitric oxide + Fe(III)-[cytochrome c] + H2O = Fe(II)-[cytochrome c] + nitrite + 2 H(+). Its function is as follows. Catalyzes the reduction of nitrite to nitric oxide (NO). It could be essential for growth and survival in oxygen-depleted environments. This is Copper-containing nitrite reductase (aniA) from Neisseria meningitidis serogroup B (strain ATCC BAA-335 / MC58).